We begin with the raw amino-acid sequence, 151 residues long: Small ribosomal subunit protein uS15 (151 aa).

Belongs to the universal ribosomal protein uS15 family.

The polypeptide is Small ribosomal subunit protein uS15 (RPS13) (Pisum sativum (Garden pea)).